Reading from the N-terminus, the 467-residue chain is MTCRTRFAPSPTGYLHIGGARTALYCWLEARHRGGQFVLRIEDTDRERSTQEAIDAILEAMDWLGLGYDEGPIYQTQRVARYQEVAEQLLAQGKAYYAYETREELDAMREAAMAKQEKPRYNGAAREQNLPYRDDPNRVIRFKNPVGGTVVFDDLIKGRIEIANSELDDMVIFRPDGFPTYNFAVVVDDWDMGITEVIRGDDHINNTPRQINIYEALDAPVPKFAHMPMILDEQGAKLSKRTGAADVMQYKDAGYLPHALINYLARLGWSHGDQELFTQQELLDLFDVKDVNSKAARLDMAKLGWVNQHYLKTDDPASIAPQLEYQLAKLGVDIAAGPAAADVVVALRERVQTLKEMAEKAVVWYQPLETYDEAAVMKHLKLGAEVPLGKARELLAAVDAWSVESVSAALHDAAAALELGMGKVAQPLRVAITGTQVSPDISQTVYLAGREGALKRIDAALIKIGAA.

Residues 9–19 carry the 'HIGH' region motif; sequence PSPTGYLHIGG. Residues 237-241 carry the 'KMSKS' region motif; sequence KLSKR. Lys-240 is a binding site for ATP.

Belongs to the class-I aminoacyl-tRNA synthetase family. Glutamate--tRNA ligase type 1 subfamily. Monomer.

Its subcellular location is the cytoplasm. The enzyme catalyses tRNA(Glu) + L-glutamate + ATP = L-glutamyl-tRNA(Glu) + AMP + diphosphate. Its function is as follows. Catalyzes the attachment of glutamate to tRNA(Glu) in a two-step reaction: glutamate is first activated by ATP to form Glu-AMP and then transferred to the acceptor end of tRNA(Glu). The protein is Glutamate--tRNA ligase of Xanthomonas axonopodis pv. citri (strain 306).